A 108-amino-acid chain; its full sequence is Large ribosomal subunit protein uL23 (108 aa).

It belongs to the universal ribosomal protein uL23 family. Part of the 50S ribosomal subunit. Contacts protein L29, and trigger factor when it is bound to the ribosome.

Its function is as follows. One of the early assembly proteins it binds 23S rRNA. One of the proteins that surrounds the polypeptide exit tunnel on the outside of the ribosome. Forms the main docking site for trigger factor binding to the ribosome. The protein is Large ribosomal subunit protein uL23 of Albidiferax ferrireducens (strain ATCC BAA-621 / DSM 15236 / T118) (Rhodoferax ferrireducens).